We begin with the raw amino-acid sequence, 207 residues long: Ribosomal RNA large subunit methyltransferase E (207 aa).

The S-adenosyl-L-methionine site is built by G60, W62, D80, D96, and D121. Catalysis depends on K161, which acts as the Proton acceptor.

The protein belongs to the class I-like SAM-binding methyltransferase superfamily. RNA methyltransferase RlmE family.

It is found in the cytoplasm. It catalyses the reaction uridine(2552) in 23S rRNA + S-adenosyl-L-methionine = 2'-O-methyluridine(2552) in 23S rRNA + S-adenosyl-L-homocysteine + H(+). In terms of biological role, specifically methylates the uridine in position 2552 of 23S rRNA at the 2'-O position of the ribose in the fully assembled 50S ribosomal subunit. The polypeptide is Ribosomal RNA large subunit methyltransferase E (Marinobacter nauticus (strain ATCC 700491 / DSM 11845 / VT8) (Marinobacter aquaeolei)).